The primary structure comprises 28 residues: Cytochrome c oxidase subunit 5B, mitochondrial (28 aa).

It belongs to the cytochrome c oxidase subunit 5B family. In terms of assembly, component of the cytochrome c oxidase (complex IV, CIV), a multisubunit enzyme composed of a catalytic core of 3 subunits and several supernumerary subunits. The complex exists as a monomer or a dimer and forms supercomplexes (SCs) in the inner mitochondrial membrane with ubiquinol-cytochrome c oxidoreductase (cytochrome b-c1 complex, complex III, CIII).

Its subcellular location is the mitochondrion inner membrane. The protein operates within energy metabolism; oxidative phosphorylation. In terms of biological role, component of the cytochrome c oxidase, the last enzyme in the mitochondrial electron transport chain which drives oxidative phosphorylation. The respiratory chain contains 3 multisubunit complexes succinate dehydrogenase (complex II, CII), ubiquinol-cytochrome c oxidoreductase (cytochrome b-c1 complex, complex III, CIII) and cytochrome c oxidase (complex IV, CIV), that cooperate to transfer electrons derived from NADH and succinate to molecular oxygen, creating an electrochemical gradient over the inner membrane that drives transmembrane transport and the ATP synthase. Cytochrome c oxidase is the component of the respiratory chain that catalyzes the reduction of oxygen to water. Electrons originating from reduced cytochrome c in the intermembrane space (IMS) are transferred via the dinuclear copper A center (CU(A)) of subunit 2 and heme A of subunit 1 to the active site in subunit 1, a binuclear center (BNC) formed by heme A3 and copper B (CU(B)). The BNC reduces molecular oxygen to 2 water molecules using 4 electrons from cytochrome c in the IMS and 4 protons from the mitochondrial matrix. This Solanum tuberosum (Potato) protein is Cytochrome c oxidase subunit 5B, mitochondrial.